The sequence spans 338 residues: Glutamate/glutamine/aspartate/asparagine-binding protein BztA (338 aa).

The first 22 residues, 1-22 (MKKSAFFGSVALAALVAGAASA), serve as a signal peptide directing secretion.

This sequence belongs to the bacterial solute-binding protein 3 family.

It is found in the periplasm. Part of a binding-protein-dependent transport system for glutamate, glutamine, aspartate and asparagine. The chain is Glutamate/glutamine/aspartate/asparagine-binding protein BztA (bztA) from Rhodobacter capsulatus (strain ATCC BAA-309 / NBRC 16581 / SB1003).